Here is a 308-residue protein sequence, read N- to C-terminus: tRNA pseudouridine synthase B (308 aa).

The Nucleophile role is filled by D47.

Belongs to the pseudouridine synthase TruB family. Type 1 subfamily.

The enzyme catalyses uridine(55) in tRNA = pseudouridine(55) in tRNA. Functionally, responsible for synthesis of pseudouridine from uracil-55 in the psi GC loop of transfer RNAs. This is tRNA pseudouridine synthase B from Xanthomonas euvesicatoria pv. vesicatoria (strain 85-10) (Xanthomonas campestris pv. vesicatoria).